The following is a 150-amino-acid chain: Large ribosomal subunit protein bL9 (150 aa).

Belongs to the bacterial ribosomal protein bL9 family.

Binds to the 23S rRNA. The protein is Large ribosomal subunit protein bL9 of Sodalis glossinidius (strain morsitans).